The sequence spans 216 residues: Noggin-1 (216 aa).

The first 18 residues, Met1–Ala18, serve as a signal peptide directing secretion. N-linked (GlcNAc...) asparagine glycosylation is present at Asn55.

Belongs to the noggin family. Homodimer; disulfide-linked.

Its subcellular location is the secreted. Inhibitor of bone morphogenetic proteins (BMP) signaling. May play an important role in the dorsoventral patterning of the embryo. The protein is Noggin-1 (nog1) of Danio rerio (Zebrafish).